A 131-amino-acid polypeptide reads, in one-letter code: Small ribosomal subunit protein uS12 (131 aa).

D89 carries the post-translational modification 3-methylthioaspartic acid. A disordered region spans residues 106 to 131 (GVDGRKQGRSKYGAKKAKVAKTASAK). Positions 112–124 (QGRSKYGAKKAKV) are enriched in basic residues.

This sequence belongs to the universal ribosomal protein uS12 family. Part of the 30S ribosomal subunit. Contacts proteins S8 and S17. May interact with IF1 in the 30S initiation complex.

In terms of biological role, with S4 and S5 plays an important role in translational accuracy. Its function is as follows. Interacts with and stabilizes bases of the 16S rRNA that are involved in tRNA selection in the A site and with the mRNA backbone. Located at the interface of the 30S and 50S subunits, it traverses the body of the 30S subunit contacting proteins on the other side and probably holding the rRNA structure together. The combined cluster of proteins S8, S12 and S17 appears to hold together the shoulder and platform of the 30S subunit. This Endomicrobium trichonymphae protein is Small ribosomal subunit protein uS12.